Consider the following 431-residue polypeptide: Probable oxidoreductase OrdL (431 aa).

This is Probable oxidoreductase OrdL (ordL) from Haemophilus influenzae (strain ATCC 51907 / DSM 11121 / KW20 / Rd).